Reading from the N-terminus, the 306-residue chain is Acetyl-coenzyme A carboxylase carboxyl transferase subunit beta (306 aa).

Positions 27–296 constitute a CoA carboxyltransferase N-terminal domain; the sequence is LWHKCPSCEA…PKFVAAPIEP (270 aa). Zn(2+)-binding residues include C31, C34, C50, and C53. A C4-type zinc finger spans residues 31-53; that stretch reads CPSCEAVLYRPELEKTLDVCPKC.

It belongs to the AccD/PCCB family. Acetyl-CoA carboxylase is a heterohexamer composed of biotin carboxyl carrier protein (AccB), biotin carboxylase (AccC) and two subunits each of ACCase subunit alpha (AccA) and ACCase subunit beta (AccD). Zn(2+) is required as a cofactor.

It localises to the cytoplasm. The catalysed reaction is N(6)-carboxybiotinyl-L-lysyl-[protein] + acetyl-CoA = N(6)-biotinyl-L-lysyl-[protein] + malonyl-CoA. The protein operates within lipid metabolism; malonyl-CoA biosynthesis; malonyl-CoA from acetyl-CoA: step 1/1. Functionally, component of the acetyl coenzyme A carboxylase (ACC) complex. Biotin carboxylase (BC) catalyzes the carboxylation of biotin on its carrier protein (BCCP) and then the CO(2) group is transferred by the transcarboxylase to acetyl-CoA to form malonyl-CoA. This chain is Acetyl-coenzyme A carboxylase carboxyl transferase subunit beta, found in Pseudomonas fluorescens (strain Pf0-1).